Reading from the N-terminus, the 472-residue chain is Methanethiol oxidase (472 aa).

Position 2 is an N-acetylalanine (alanine 2). A phosphoserine mark is found at serine 111 and serine 467.

The protein belongs to the selenium-binding protein family. In terms of assembly, interacts with USP33. In terms of processing, the N-terminus is blocked. Highly expressed in liver, kidney and, to a lesser extent, lung.

It is found in the nucleus. The protein resides in the cytoplasm. The protein localises to the cytosol. It localises to the membrane. It catalyses the reaction methanethiol + O2 + H2O = hydrogen sulfide + formaldehyde + H2O2 + H(+). It functions in the pathway organosulfur degradation. Functionally, catalyzes the oxidation of methanethiol, an organosulfur compound known to be produced in substantial amounts by gut bacteria. Selenium-binding protein which may be involved in the sensing of reactive xenobiotics in the cytoplasm. May be involved in intra-Golgi protein transport. The polypeptide is Methanethiol oxidase (Selenbp1) (Mus musculus (Mouse)).